Here is a 91-residue protein sequence, read N- to C-terminus: UPF0512 protein F (91 aa).

This sequence belongs to the UPF0512 family.

This Dictyostelium discoideum (Social amoeba) protein is UPF0512 protein F.